Here is a 296-residue protein sequence, read N- to C-terminus: Ribosomal RNA small subunit methyltransferase H (296 aa).

S-adenosyl-L-methionine is bound by residues 38-40, E57, F80, D103, and H110; that span reads GAH.

It belongs to the methyltransferase superfamily. RsmH family.

Its subcellular location is the cytoplasm. The enzyme catalyses cytidine(1402) in 16S rRNA + S-adenosyl-L-methionine = N(4)-methylcytidine(1402) in 16S rRNA + S-adenosyl-L-homocysteine + H(+). Specifically methylates the N4 position of cytidine in position 1402 (C1402) of 16S rRNA. This chain is Ribosomal RNA small subunit methyltransferase H, found in Borrelia garinii subsp. bavariensis (strain ATCC BAA-2496 / DSM 23469 / PBi) (Borreliella bavariensis).